A 689-amino-acid chain; its full sequence is Glycine--tRNA ligase beta subunit (689 aa).

Belongs to the class-II aminoacyl-tRNA synthetase family. Tetramer of two alpha and two beta subunits.

It localises to the cytoplasm. The catalysed reaction is tRNA(Gly) + glycine + ATP = glycyl-tRNA(Gly) + AMP + diphosphate. The chain is Glycine--tRNA ligase beta subunit from Mannheimia succiniciproducens (strain KCTC 0769BP / MBEL55E).